Here is a 402-residue protein sequence, read N- to C-terminus: Chorismate synthase (402 aa).

NADP(+) contacts are provided by arginine 40 and arginine 46. FMN-binding positions include 134 to 136, 255 to 256, glycine 299, 314 to 318, and arginine 340; these read RAS, QA, and KPIAT.

This sequence belongs to the chorismate synthase family. As to quaternary structure, homotetramer. It depends on FMNH2 as a cofactor.

The enzyme catalyses 5-O-(1-carboxyvinyl)-3-phosphoshikimate = chorismate + phosphate. The protein operates within metabolic intermediate biosynthesis; chorismate biosynthesis; chorismate from D-erythrose 4-phosphate and phosphoenolpyruvate: step 7/7. Its function is as follows. Catalyzes the anti-1,4-elimination of the C-3 phosphate and the C-6 proR hydrogen from 5-enolpyruvylshikimate-3-phosphate (EPSP) to yield chorismate, which is the branch point compound that serves as the starting substrate for the three terminal pathways of aromatic amino acid biosynthesis. This reaction introduces a second double bond into the aromatic ring system. The chain is Chorismate synthase from Leifsonia xyli subsp. xyli (strain CTCB07).